The sequence spans 278 residues: 3-methyl-2-oxobutanoate hydroxymethyltransferase (278 aa).

Positions 44 and 83 each coordinate Mg(2+). 3-methyl-2-oxobutanoate is bound by residues 44–45, aspartate 83, and lysine 112; that span reads DS. Glutamate 114 is a Mg(2+) binding site. Glutamate 181 acts as the Proton acceptor in catalysis.

The protein belongs to the PanB family. As to quaternary structure, homodecamer; pentamer of dimers. Mg(2+) serves as cofactor.

The protein resides in the cytoplasm. It carries out the reaction 3-methyl-2-oxobutanoate + (6R)-5,10-methylene-5,6,7,8-tetrahydrofolate + H2O = 2-dehydropantoate + (6S)-5,6,7,8-tetrahydrofolate. It functions in the pathway cofactor biosynthesis; (R)-pantothenate biosynthesis; (R)-pantoate from 3-methyl-2-oxobutanoate: step 1/2. Functionally, catalyzes the reversible reaction in which hydroxymethyl group from 5,10-methylenetetrahydrofolate is transferred onto alpha-ketoisovalerate to form ketopantoate. The chain is 3-methyl-2-oxobutanoate hydroxymethyltransferase from Roseiflexus sp. (strain RS-1).